Here is a 101-residue protein sequence, read N- to C-terminus: Small ribosomal subunit protein uS14A (101 aa).

Disordered regions lie at residues 1–21 (MAKK…AHHA) and 49–73 (QRLP…PRGT). Composition is skewed to basic and acidic residues over residues 8–21 (AKNE…AHHA) and 61–70 (RNRDAADGRP).

Belongs to the universal ribosomal protein uS14 family. Part of the 30S ribosomal subunit. Contacts proteins S3 and S10.

In terms of biological role, binds 16S rRNA, required for the assembly of 30S particles and may also be responsible for determining the conformation of the 16S rRNA at the A site. The sequence is that of Small ribosomal subunit protein uS14A from Kineococcus radiotolerans (strain ATCC BAA-149 / DSM 14245 / SRS30216).